A 684-amino-acid polypeptide reads, in one-letter code: Protein real-time (684 aa).

Positions 2 to 178 constitute a PRELI/MSF1 domain; that stretch reads VQKYESPVRI…FVNELKQEGI (177 aa). Positions 297–474 constitute a CRAL-TRIO domain; sequence TPAVVEKYFP…FLGGSCNVID (178 aa). One can recognise a GOLD domain in the interval 537–684; sequence HHGLYKAVDL…GFSSNSLQSR (148 aa).

It is found in the mitochondrion. The protein is Protein real-time of Anopheles gambiae (African malaria mosquito).